We begin with the raw amino-acid sequence, 740 residues long: Probable type IV piliation system protein DR_0774 (740 aa).

The signal sequence occupies residues 1–20 (MNKRHALLLTAVLGMATAYA).

Belongs to the bacterial secretin family.

The protein localises to the cell envelope. Functionally, could be part of the type IV piliation system (T4P). May contribute at the cohesion between the S-layer and the outer membrane by forming oligomers. Could also be the main channel through which trafficking is managed. The protein is Probable type IV piliation system protein DR_0774 of Deinococcus radiodurans (strain ATCC 13939 / DSM 20539 / JCM 16871 / CCUG 27074 / LMG 4051 / NBRC 15346 / NCIMB 9279 / VKM B-1422 / R1).